Reading from the N-terminus, the 38-residue chain is Photosystem II reaction center protein L (38 aa).

A helical membrane pass occupies residues 17-37; sequence SLYWGLLLIFVLAVLFSNYFF.

This sequence belongs to the PsbL family. In terms of assembly, PSII is composed of 1 copy each of membrane proteins PsbA, PsbB, PsbC, PsbD, PsbE, PsbF, PsbH, PsbI, PsbJ, PsbK, PsbL, PsbM, PsbT, PsbX, PsbY, PsbZ, Psb30/Ycf12, at least 3 peripheral proteins of the oxygen-evolving complex and a large number of cofactors. It forms dimeric complexes.

The protein resides in the plastid. It localises to the chloroplast thylakoid membrane. Functionally, one of the components of the core complex of photosystem II (PSII). PSII is a light-driven water:plastoquinone oxidoreductase that uses light energy to abstract electrons from H(2)O, generating O(2) and a proton gradient subsequently used for ATP formation. It consists of a core antenna complex that captures photons, and an electron transfer chain that converts photonic excitation into a charge separation. This subunit is found at the monomer-monomer interface and is required for correct PSII assembly and/or dimerization. In Gnetum gnemon (Spanish joint-fir), this protein is Photosystem II reaction center protein L.